Consider the following 595-residue polypeptide: Estrogen receptor (595 aa).

The modulating (transactivation AF-1); mediates interaction with MACROD1 stretch occupies residues 1 to 184 (MTMTLHTKAS…AMESAKETRY (184 aa)). Ser10 is a glycosylation site (O-linked (GlcNAc) serine). The required for interaction with NCOA1 stretch occupies residues 35 to 47 (LERPLGEVYVDSS). The interaction with DDX5; self-association stretch occupies residues 35 to 174 (LERPLGEVYV…LASTSDKGSM (140 aa)). A phosphoserine; by CDK2 mark is found at Ser104 and Ser106. The residue at position 118 (Ser118) is a Phosphoserine. A disordered region spans residues 144 to 174 (AGPPAFYRPNSDNRRQGGRERLASTSDKGSM). Residues 154 to 165 (SDNRRQGGRERL) show a composition bias toward basic and acidic residues. Ser167 carries the phosphoserine; by CK2 modification. NR C4-type zinc fingers lie at residues 185–205 (CAVC…CEGC) and 221–245 (CPAT…LRKC). Residues 185–250 (CAVCNDYASG…RLRKCYEVGM (66 aa)) constitute a DNA-binding region (nuclear receptor). A mediates interaction with DNTTIP2 region spans residues 185–310 (CAVCNDYASG…TKKNSPVLSL (126 aa)). The segment at 251–310 (MKGGIRKDRRGGRMLKHKRQRDDGEGRNEAVPPGDMRSANLWPSPLLIKHTKKNSPVLSL) is hinge. Residues 257 to 269 (KDRRGGRMLKHKR) show a composition bias toward basic residues. A disordered region spans residues 257-288 (KDRRGGRMLKHKRQRDDGEGRNEAVPPGDMRS). Position 260 is an asymmetric dimethylarginine; by PRMT1 (Arg260). Positions 262 to 595 (GRMLKHKRQR…GEAENFPTTI (334 aa)) are interaction with AKAP13. Residues 264 to 594 (MLKHKRQRDD…TGEAENFPTT (331 aa)) are self-association. The NR LBD domain occupies 311–547 (TADQMISALL…DLLLEMLDAH (237 aa)). A transactivation AF-2 region spans residues 311 to 594 (TADQMISALL…TGEAENFPTT (284 aa)). The 17beta-estradiol site is built by Glu353 and Arg394. Residue Cys447 is the site of S-palmitoyl cysteine attachment. 17beta-estradiol is bound at residue His524. The residue at position 537 (Tyr537) is a Phosphotyrosine; by Tyr-kinases. Positions 551–575 (APTNLGGPPPEDMSQSQLATSGSTP) are disordered. The segment covering 563–575 (MSQSQLATSGSTP) has biased composition (polar residues).

Belongs to the nuclear hormone receptor family. NR3 subfamily. In terms of assembly, binds DNA as a homodimer. Can form a heterodimer with ESR2. Interacts with coactivator NCOA5. Interacts with PELP1, the interaction is enhanced by 17-beta-estradiol; the interaction increases ESR1 transcriptional activity. Interacts with NCOA7; the interaction is ligand-inducible. Interacts with AKAP13, CUEDC2, HEXIM1, KDM5A, MAP1S, SMARD1, and UBE1C. Interacts with MUC1; the interaction is stimulated by 7 beta-estradiol (E2) and enhances ESR1-mediated transcription. Interacts with DNTTIP2, and UIMC1. Interacts with KMT2D/MLL2. Interacts with ATAD2; the interaction is enhanced by estradiol. Interacts with KIF18A and LDB1. Interacts with RLIM (via its C-terminus). Interacts with MACROD1. Interacts with SH2D4A and PLCG. Interacts with SH2D4A; the interaction blocks binding to PLCG and inhibits estrogen-induced cell proliferation. Interacts with DYNLL1. Interacts with CCDC62; the interaction requires estradiol and appears to enhance the transcription of target genes. Interacts with NR2C1; the interaction prevents homodimerization of ESR1 and suppresses its transcriptional activity and cell growth. Interacts with DNAAF4. Interacts with PRMT2. Interacts with RBFOX2. Interacts with EP300; the interaction is estrogen-dependent and enhanced by CITED1. Interacts with CITED1; the interaction is estrogen-dependent. Interacts with FAM120B, FOXL2, PHB2 and SLC30A9. Interacts with coactivators NCOA3 and NCOA6. Interacts with STK3/MST2 only in the presence of SAV1 and vice-versa. Binds to CSNK1D. Interacts with NCOA2; NCOA2 can interact with ESR1 AF-1 and AF-2 domains simultaneously and mediate their transcriptional synergy. Interacts with DDX5. Interacts with NCOA1; the interaction seems to require a self-association of N-terminal and C-terminal regions. Interacts with ZNF366, DDX17, NFKB1, RELA, SP1 and SP3. Interacts with NRIP1. Interacts with GPER1; the interaction occurs in an estrogen-dependent manner. Interacts with CLOCK and the interaction is stimulated by estrogen. Interacts with TRIP4 (ufmylated); estrogen dependent. Interacts with LMTK3; the interaction phosphorylates ESR1 (in vitro) and protects it against proteasomal degradation. Interacts with CCAR2 (via N-terminus) in a ligand-independent manner. Interacts with ZFHX3. Interacts with SFR1 in a ligand-dependent and -independent manner. Interacts with DCAF13, LATS1 and DCAF1; regulates ESR1 ubiquitination and ubiquitin-mediated proteasomal degradation. Interacts (via DNA-binding domain) with POU4F2 (C-terminus); this interaction increases the estrogen receptor ESR1 transcriptional activity in a DNA- and ligand 17-beta-estradiol-independent manner. Interacts with ESRRB isoform 1. Interacts with UBE3A and WBP2. Interacts with GTF2B. Interacts with RBM39. In the absence of hormonal ligand, interacts with TACC1. Interacts with PI3KR1 or PI3KR2 and PTK2/FAK1. Interacts with SRC. Interacts with BAG1; the interaction is promoted in the absence of estradiol (17-beta-estradiol/E2). Interacts with and ubiquitinated by STUB1; the interaction is promoted in the absence of estradiol (17-beta-estradiol/E2). Interacts with NEDD8. Post-translationally, phosphorylated by cyclin A/CDK2 and CK1. Phosphorylation probably enhances transcriptional activity. Dephosphorylation at Ser-118 by PPP5C inhibits its transactivation activity. Phosphorylated by LMTK3 (in vitro). Ubiquitinated; regulated by LATS1 via DCAF1 it leads to ESR1 proteasomal degradation. Deubiquitinated by OTUB1. Ubiquitinated by STUB1/CHIP; in the CA1 hippocampal region following loss of endogenous circulating estradiol (17-beta-estradiol/E2). Ubiquitinated by UBR5, leading to its degradation: UBR5 specifically recognizes and binds ligand-bound ESR1 when it is not associated with coactivators (NCOAs). In presence of NCOAs, the UBR5-degron is not accessible, preventing its ubiquitination and degradation. In terms of processing, palmitoylated at Cys-447 by ZDHHC7 and ZDHHC21. Palmitoylation is required for plasma membrane targeting and for rapid intracellular signaling via ERK and AKT kinases and cAMP generation, but not for signaling mediated by the nuclear hormone receptor. Post-translationally, dimethylated by PRMT1 at Arg-260. The methylation may favor cytoplasmic localization. Demethylated by JMJD6 at Arg-260.

It is found in the nucleus. The protein resides in the cytoplasm. The protein localises to the golgi apparatus. It localises to the cell membrane. Its function is as follows. Nuclear hormone receptor. The steroid hormones and their receptors are involved in the regulation of eukaryotic gene expression and affect cellular proliferation and differentiation in target tissues. Ligand-dependent nuclear transactivation involves either direct homodimer binding to a palindromic estrogen response element (ERE) sequence or association with other DNA-binding transcription factors, such as AP-1/c-Jun, c-Fos, ATF-2, Sp1 and Sp3, to mediate ERE-independent signaling. Ligand binding induces a conformational change allowing subsequent or combinatorial association with multiprotein coactivator complexes through LXXLL motifs of their respective components. Mutual transrepression occurs between the estrogen receptor (ER) and NF-kappa-B in a cell-type specific manner. Decreases NF-kappa-B DNA-binding activity and inhibits NF-kappa-B-mediated transcription from the IL6 promoter and displace RELA/p65 and associated coregulators from the promoter. Recruited to the NF-kappa-B response element of the CCL2 and IL8 promoters and can displace CREBBP. Present with NF-kappa-B components RELA/p65 and NFKB1/p50 on ERE sequences. Can also act synergistically with NF-kappa-B to activate transcription involving respective recruitment adjacent response elements; the function involves CREBBP. Can activate the transcriptional activity of TFF1. Also mediates membrane-initiated estrogen signaling involving various kinase cascades. Essential for MTA1-mediated transcriptional regulation of BRCA1 and BCAS3. Maintains neuronal survival in response to ischemic reperfusion injury when in the presence of circulating estradiol (17-beta-estradiol/E2). The polypeptide is Estrogen receptor (ESR1) (Sus scrofa (Pig)).